The sequence spans 128 residues: Aspartate 1-decarboxylase (128 aa).

Ser-25 (schiff-base intermediate with substrate; via pyruvic acid) is an active-site residue. Ser-25 is subject to Pyruvic acid (Ser). Thr-57 provides a ligand contact to substrate. Tyr-58 (proton donor) is an active-site residue. Gly-73–Ala-75 provides a ligand contact to substrate.

Belongs to the PanD family. In terms of assembly, heterooctamer of four alpha and four beta subunits. The cofactor is pyruvate. In terms of processing, is synthesized initially as an inactive proenzyme, which is activated by self-cleavage at a specific serine bond to produce a beta-subunit with a hydroxyl group at its C-terminus and an alpha-subunit with a pyruvoyl group at its N-terminus.

The protein resides in the cytoplasm. It catalyses the reaction L-aspartate + H(+) = beta-alanine + CO2. The protein operates within cofactor biosynthesis; (R)-pantothenate biosynthesis; beta-alanine from L-aspartate: step 1/1. Catalyzes the pyruvoyl-dependent decarboxylation of aspartate to produce beta-alanine. The polypeptide is Aspartate 1-decarboxylase (Staphylococcus epidermidis (strain ATCC 35984 / DSM 28319 / BCRC 17069 / CCUG 31568 / BM 3577 / RP62A)).